The primary structure comprises 47 residues: Lysis protein for colicin E8 (47 aa).

The N-terminal stretch at 1 to 19 (MKKITGIILLLLAVIILAA) is a signal peptide. A lipid anchor (N-palmitoyl cysteine) is attached at cysteine 20. Cysteine 20 carries the S-diacylglycerol cysteine lipid modification.

The protein localises to the cell outer membrane. In terms of biological role, lysis proteins are required for both colicin release and partial cell lysis. The sequence is that of Lysis protein for colicin E8 (lys) from Escherichia coli.